Reading from the N-terminus, the 257-residue chain is UPF0246 protein RSKD131_2757 (257 aa).

Belongs to the UPF0246 family.

This Cereibacter sphaeroides (strain KD131 / KCTC 12085) (Rhodobacter sphaeroides) protein is UPF0246 protein RSKD131_2757.